The following is a 223-amino-acid chain: Cytotoxic T-lymphocyte protein 4 (223 aa).

Residues 1–35 form the signal peptide; that stretch reads MACLGLRRYKAQLQLPSRTWPFVALLTLLFIPVFS. In terms of domain architecture, Ig-like V-type spans 36 to 145; that stretch reads EAIQVTQPSV…PPPYFVGMGN (110 aa). Topologically, residues 36–161 are extracellular; sequence EAIQVTQPSV…IDPEPCPDSD (126 aa). Positions 46–50 are homodimerization; that stretch reads VLASS. Disulfide bonds link Cys-58–Cys-129 and Cys-85–Cys-103. Asn-108 and Asn-113 each carry an N-linked (GlcNAc...) asparagine glycan. Positions 134 to 139 are important for interaction with CD80 and CD86; it reads MYPPPY. N-linked (GlcNAc...) asparagine glycosylation is present at Asn-145. The homodimerization stretch occupies residues 150 to 155; sequence YVIDPE. The helical transmembrane segment at 162 to 182 threads the bilayer; that stretch reads FLLWILVAVSLGLFFYSFLVS. Residues 183-223 are Cytoplasmic-facing; sequence AVSLSKMLKKRSPLTTGVYVKMPPTEPECEKQFQPYFIPIN. At Tyr-201 the chain carries Phosphotyrosine; by TXK and JAK2.

As to quaternary structure, homodimer; disulfide-linked. Binds to CD80/B7-1 and CD86/B7.2. Interacts with ICOSLG. Post-translationally, N-glycosylation is important for dimerization. Phosphorylation at Tyr-201 prevents binding to the AP-2 adapter complex, blocks endocytosis, and leads to retention of CTLA4 on the cell surface. As to expression, widely expressed with highest levels in lymphoid tissues.

Its subcellular location is the cell membrane. Its function is as follows. Inhibitory receptor acting as a major negative regulator of T-cell responses. The affinity of CTLA4 for its natural B7 family ligands, CD80 and CD86, is considerably stronger than the affinity of their cognate stimulatory coreceptor CD28. The polypeptide is Cytotoxic T-lymphocyte protein 4 (Ctla4) (Mus musculus (Mouse)).